An 81-amino-acid chain; its full sequence is Escargot/snail protein homolog (81 aa).

4 C2H2-type zinc fingers span residues 1-5 (HQQFH), 17-39 (FSCK…IRTH), 43-65 (CKCH…IRTH), and 71-81 (FSCQHCNRAFA).

The protein belongs to the snail C2H2-type zinc-finger protein family.

It localises to the nucleus. The sequence is that of Escargot/snail protein homolog from Apis mellifera (Honeybee).